The primary structure comprises 70 residues: Cuticle protein 16 isoform b (70 aa).

This chain is Cuticle protein 16 isoform b, found in Limulus polyphemus (Atlantic horseshoe crab).